We begin with the raw amino-acid sequence, 249 residues long: Phosphoribosylaminoimidazole-succinocarboxamide synthase (249 aa).

It belongs to the SAICAR synthetase family.

It carries out the reaction 5-amino-1-(5-phospho-D-ribosyl)imidazole-4-carboxylate + L-aspartate + ATP = (2S)-2-[5-amino-1-(5-phospho-beta-D-ribosyl)imidazole-4-carboxamido]succinate + ADP + phosphate + 2 H(+). The protein operates within purine metabolism; IMP biosynthesis via de novo pathway; 5-amino-1-(5-phospho-D-ribosyl)imidazole-4-carboxamide from 5-amino-1-(5-phospho-D-ribosyl)imidazole-4-carboxylate: step 1/2. This is Phosphoribosylaminoimidazole-succinocarboxamide synthase from Roseiflexus castenholzii (strain DSM 13941 / HLO8).